The following is a 389-amino-acid chain: Sterol methyltransferase-like 2 (389 aa).

A helical membrane pass occupies residues leucine 25–isoleucine 45.

This sequence belongs to the class I-like SAM-binding methyltransferase superfamily. Erg6/SMT family.

Its subcellular location is the microsome membrane. In terms of biological role, unable to convert squalene, botryococcene, cycloartenol, zymosterol or lanosterol to mono-, di-, tri- or tetramethylated derivatives. In Botryococcus braunii (Green alga), this protein is Sterol methyltransferase-like 2 (SMT-2).